The sequence spans 1127 residues: Carbamoyl phosphate synthase large chain (1127 aa).

Positions 1–402 are carboxyphosphate synthetic domain; sequence MPKRTDIKSV…SLGKAMRSID (402 aa). ATP is bound by residues Arg-129, Arg-169, Gly-175, Gly-176, Glu-208, Ile-210, Glu-215, Gly-241, Val-242, His-243, Gln-285, and Glu-299. The ATP-grasp 1 domain maps to 133–328; it reads KKVVDEAGAE…IAKIATKLAL (196 aa). Residues Gln-285, Glu-299, and Asn-301 each contribute to the Mg(2+) site. 3 residues coordinate Mn(2+): Gln-285, Glu-299, and Asn-301. The segment at 403–551 is oligomerization domain; it reads KRHMGFNWDG…YYYSCYADET (149 aa). The carbamoyl phosphate synthetic domain stretch occupies residues 552-962; the sequence is ELRPREREAV…AFAKSQLAAY (411 aa). The ATP-grasp 2 domain occupies 681–881; it reads GEVLKKAEMN…LAKAAARIMA (201 aa). 10 residues coordinate ATP: Arg-717, Lys-765, Leu-767, Glu-772, Gly-797, Val-798, His-799, Ser-800, Gln-840, and Glu-852. Positions 840, 852, and 854 each coordinate Mg(2+). Mn(2+)-binding residues include Gln-840, Glu-852, and Asn-854. The segment at 963-1127 is allosteric domain; that stretch reads DGGLPTHGNV…QLFELERREF (165 aa). In terms of domain architecture, MGS-like spans 964-1127; sequence GGLPTHGNVF…QLFELERREF (164 aa).

It belongs to the CarB family. As to quaternary structure, composed of two chains; the small (or glutamine) chain promotes the hydrolysis of glutamine to ammonia, which is used by the large (or ammonia) chain to synthesize carbamoyl phosphate. Tetramer of heterodimers (alpha,beta)4. Mg(2+) serves as cofactor. It depends on Mn(2+) as a cofactor.

The enzyme catalyses hydrogencarbonate + L-glutamine + 2 ATP + H2O = carbamoyl phosphate + L-glutamate + 2 ADP + phosphate + 2 H(+). The catalysed reaction is hydrogencarbonate + NH4(+) + 2 ATP = carbamoyl phosphate + 2 ADP + phosphate + 2 H(+). The protein operates within amino-acid biosynthesis; L-arginine biosynthesis; carbamoyl phosphate from bicarbonate: step 1/1. Its pathway is pyrimidine metabolism; UMP biosynthesis via de novo pathway; (S)-dihydroorotate from bicarbonate: step 1/3. Its function is as follows. Large subunit of the glutamine-dependent carbamoyl phosphate synthetase (CPSase). CPSase catalyzes the formation of carbamoyl phosphate from the ammonia moiety of glutamine, carbonate, and phosphate donated by ATP, constituting the first step of 2 biosynthetic pathways, one leading to arginine and/or urea and the other to pyrimidine nucleotides. The large subunit (synthetase) binds the substrates ammonia (free or transferred from glutamine from the small subunit), hydrogencarbonate and ATP and carries out an ATP-coupled ligase reaction, activating hydrogencarbonate by forming carboxy phosphate which reacts with ammonia to form carbamoyl phosphate. In Bifidobacterium longum (strain DJO10A), this protein is Carbamoyl phosphate synthase large chain.